Consider the following 108-residue polypeptide: Long neurotoxin 43 (108 aa).

Residues 1–21 (MKTLLLTLVVVTIVCLDLAYT) form the signal peptide. 5 disulfides stabilise this stretch: C24-C42, C35-C63, C48-C52, C67-C78, and C79-C84.

Belongs to the three-finger toxin family. Long-chain subfamily. Type II alpha-neurotoxin sub-subfamily. As to expression, expressed by the venom gland.

The protein localises to the secreted. Binds with high affinity to muscular (alpha-1/CHRNA1) and neuronal (alpha-7/CHRNA7) nicotinic acetylcholine receptor (nAChR) and inhibits acetylcholine from binding to the receptor, thereby impairing neuromuscular and neuronal transmission. The sequence is that of Long neurotoxin 43 from Drysdalia coronoides (White-lipped snake).